Consider the following 720-residue polypeptide: Catalase-peroxidase (720 aa).

Positions 82-207 (WHSAGTYRTF…LGNTVMGLIY (126 aa)) form a cross-link, tryptophyl-tyrosyl-methioninium (Trp-Tyr) (with M-233). Catalysis depends on H83, which acts as the Proton acceptor. The tryptophyl-tyrosyl-methioninium (Tyr-Met) (with W-82) cross-link spans 207–233 (YVNPEGPNGEPDLEGSAKNIRESFGKM). Position 248 (H248) interacts with heme b.

The protein belongs to the peroxidase family. Peroxidase/catalase subfamily. As to quaternary structure, homodimer or homotetramer. Heme b is required as a cofactor. Post-translationally, formation of the three residue Trp-Tyr-Met cross-link is important for the catalase, but not the peroxidase activity of the enzyme.

The catalysed reaction is H2O2 + AH2 = A + 2 H2O. The enzyme catalyses 2 H2O2 = O2 + 2 H2O. Its function is as follows. Bifunctional enzyme with both catalase and broad-spectrum peroxidase activity. In Halobacterium salinarum (strain ATCC 29341 / DSM 671 / R1), this protein is Catalase-peroxidase.